A 222-amino-acid polypeptide reads, in one-letter code: MSRSDKNPHERLKTAKKRTASSARWLSRQLNDPYVKKAKAEGWRSRAAFKLIELDEKFGLLKGAKRVVDLGIAPGGWSQVVRKKAPAAKIVGIDLLPTEPIEGVTIFEMDFMADEAPEALQSALDGPPDLVLSDMAANTVGHKQTDHLRTMGLVETAVDFAVQTLAPGGAFVAKVFAGGTDTELLAILKKNFTTVKHAKPPASRKDSSEWYVIAQGFKGRPD.

A compositionally biased stretch (basic and acidic residues) spans 1-13; the sequence is MSRSDKNPHERLK. Residues 1–22 form a disordered region; the sequence is MSRSDKNPHERLKTAKKRTASS. Positions 75, 77, 94, 110, and 134 each coordinate S-adenosyl-L-methionine. Catalysis depends on Lys-174, which acts as the Proton acceptor.

Belongs to the class I-like SAM-binding methyltransferase superfamily. RNA methyltransferase RlmE family.

It localises to the cytoplasm. It carries out the reaction uridine(2552) in 23S rRNA + S-adenosyl-L-methionine = 2'-O-methyluridine(2552) in 23S rRNA + S-adenosyl-L-homocysteine + H(+). Its function is as follows. Specifically methylates the uridine in position 2552 of 23S rRNA at the 2'-O position of the ribose in the fully assembled 50S ribosomal subunit. The chain is Ribosomal RNA large subunit methyltransferase E from Novosphingobium aromaticivorans (strain ATCC 700278 / DSM 12444 / CCUG 56034 / CIP 105152 / NBRC 16084 / F199).